We begin with the raw amino-acid sequence, 262 residues long: Acyl-[acyl-carrier-protein]--UDP-N-acetylglucosamine O-acyltransferase (262 aa).

Belongs to the transferase hexapeptide repeat family. LpxA subfamily. Homotrimer.

It is found in the cytoplasm. It catalyses the reaction a (3R)-hydroxyacyl-[ACP] + UDP-N-acetyl-alpha-D-glucosamine = a UDP-3-O-[(3R)-3-hydroxyacyl]-N-acetyl-alpha-D-glucosamine + holo-[ACP]. It functions in the pathway glycolipid biosynthesis; lipid IV(A) biosynthesis; lipid IV(A) from (3R)-3-hydroxytetradecanoyl-[acyl-carrier-protein] and UDP-N-acetyl-alpha-D-glucosamine: step 1/6. Functionally, involved in the biosynthesis of lipid A, a phosphorylated glycolipid that anchors the lipopolysaccharide to the outer membrane of the cell. The protein is Acyl-[acyl-carrier-protein]--UDP-N-acetylglucosamine O-acyltransferase of Vibrio vulnificus (strain CMCP6).